Reading from the N-terminus, the 284-residue chain is Serine protease 57 (284 aa).

Positions 1-35 are cleaved as a signal peptide; sequence MPSSTAMVPGTRGGWHCLVLTTAAALTQLMWLPGC. Residues 40-269 form the Peptidase S1 domain; sequence IVGGHEVTPH…FVTWIWDVVR (230 aa). A disulfide bridge connects residues C65 and C81. Active-site charge relay system residues include H80 and D128. A glycan (N-linked (GlcNAc...) asparagine) is linked at N135. 3 disulfide bridges follow: C163/C230, C194/C208, and C220/C245. Catalysis depends on S224, which acts as the Charge relay system.

It belongs to the peptidase S1 family. In terms of processing, after cleavage of the signal peptide, the N-terminus is probably further processed by CTSC. Processing by CTSC is probably required for accumulation in cytoplasmic granules; in the absence of CTSC the protein does not accumulate. N-glycosylated.

It localises to the cytoplasmic granule lumen. The protein resides in the secreted. In terms of biological role, serine protease that cleaves preferentially after Arg residues. Can also cleave after citrulline (deimidated arginine) and methylarginine residues. This chain is Serine protease 57 (Prss57), found in Mus musculus (Mouse).